Consider the following 787-residue polypeptide: MNITNKFQHTPIQGQPQSNLQAQQILLSQLHQGQAQQQQQQQQQQQQQQQSSAGVLGSGFQPSDNFGESLNQNIYQNNYQRAQPSLQQQFFPQFQQSQQQPSQQANNASQLQQPYQPAQQMVRQTSHFQQQQQQQPSSQQFYSQQQASVLQQQQQQQIQLQSAHQQQSSLLNMNSINVDNPNSVYWQHQQQLCQISRGSNVPHYYARQYASNSRKAKNPYSEVKSVGLVEATRSMVASLEDEEEKKKKPINYQGTPTTSAALLHNKKSTQDIFEDDSMEEQRMRLKTQGKQLWCQLDLSGQGLVNISSKLFHYDFLESLYLSNNKLNSIPSSISKLRNLRTLDLSHNRINELPEELGLCFNLRYLFLFDNNIKTLPYSFGNMIELLFIGIEGNPLEPSIANLIAEKGTKELIATLRDQTTVKRTPKPRCWLTLEDDGEVVDSDEVYKVEPESSDNFTVLSYNTLCQHYATPKMYKFTPSWALQWDYRKNLLEKEVLNYNTDIVCMQEVETKTFQEFWLPVMTANGYKGYFFSKTRSKTMSETDSKKVDGCATFFKNDKFSLIHKQNFEYNSVCMGSDKYKKTKDLFNRFMNKDNIALISYLQHKESGEKIAVVNTHLHWDPAFNDVKALQVGILLEELQGIIKKYRHTNSNEDIKNSSIVVCGDFNSVKDSAVYQLFSTGASKGHEDMNGRDYGKFTEDGFHHPFKLKSAYEAVGELPFTNLTPAFTDNIDYIWYSTPTLQVKGLLGGVDEEYTSHSIGFPDANFPSDHVPILAKFQLKKGKKNHSV.

Positions 37–54 (QQQQQQQQQQQQQQSSAG) are enriched in low complexity. Disordered regions lie at residues 37–70 (QQQQ…GESL) and 92–137 (PQFQ…QQPS). The segment covering 60–70 (FQPSDNFGESL) has biased composition (polar residues). LRR repeat units follow at residues 291 to 313 (QLWC…LFHY), 315 to 336 (FLES…ISKL), 338 to 359 (NLRT…LGLC), 361 to 382 (NLRY…FGNM), and 384 to 406 (ELLF…IAEK). Glutamate 507 contacts Mg(2+).

The protein belongs to the CCR4/nocturin family. Mg(2+) is required as a cofactor.

The protein resides in the cytoplasm. Its subcellular location is the nucleus. The enzyme catalyses Exonucleolytic cleavage of poly(A) to 5'-AMP.. Acts as a catalytic component of the CCR4-NOT core complex, which in the nucleus seems to be a general transcription factor, and in the cytoplasm the major mRNA deadenylase involved in mRNA turnover. Ccr4 has 3'-5' RNase activity with a strong preference for polyadenylated substrates and also low exonuclease activity towards single-stranded DNA. In Candida albicans (strain SC5314 / ATCC MYA-2876) (Yeast), this protein is CCR4-Not complex 3'-5'-exoribonuclease subunit Ccr4 (CCR4).